Reading from the N-terminus, the 230-residue chain is Thymidylate synthase 1 (230 aa).

92 to 93 (RR) contributes to the dUMP binding site. Cys112 serves as the catalytic Nucleophile. DUMP is bound by residues 132–135 (RSND), Asn143, and 173–175 (HVY). Asp135 provides a ligand contact to (6R)-5,10-methylene-5,6,7,8-tetrahydrofolate.

The protein belongs to the thymidylate synthase family. Bacterial-type ThyA subfamily. In terms of assembly, homodimer.

It localises to the cytoplasm. It carries out the reaction dUMP + (6R)-5,10-methylene-5,6,7,8-tetrahydrofolate = 7,8-dihydrofolate + dTMP. The protein operates within pyrimidine metabolism; dTTP biosynthesis. Catalyzes the reductive methylation of 2'-deoxyuridine-5'-monophosphate (dUMP) to 2'-deoxythymidine-5'-monophosphate (dTMP) while utilizing 5,10-methylenetetrahydrofolate (mTHF) as the methyl donor and reductant in the reaction, yielding dihydrofolate (DHF) as a by-product. This enzymatic reaction provides an intracellular de novo source of dTMP, an essential precursor for DNA biosynthesis. The sequence is that of Thymidylate synthase 1 from Bacillus amyloliquefaciens (Bacillus velezensis).